The primary structure comprises 209 residues: Abscisic acid receptor PYL3 (209 aa).

Positions 1-23 (MNLAPIHDPSSSSTTTTSSSTPY) are disordered. The span at 10 to 21 (SSSSTTTTSSST) shows a compositional bias: low complexity. Residues 43–205 (FPRSPNTCTS…NLQNLAVIST (163 aa)) form an START-like region. Abscisate contacts are provided by residues lysine 79, 113 to 118 (ASTSVE), 140 to 146 (RLNNYRS), and glutamate 170. Residues 109–113 (SGLPA) carry the Gate loop motif. Residues 139–141 (HRL) carry the Latch loop motif.

This sequence belongs to the PYR/PYL/RCAR abscisic acid intracellular receptor family. As to quaternary structure, homodimer and monomer. Binds ABA on one subunit only. ABA-binding favors monomer and trans-homodimer intermediate, and increases PP2C inhibitor activity. Binds both (-)-ABA and (+)-ABA. Binds to CARs protein in an ABA-independent manner, both at the plasma membrane and in the nucleus. Interacts with HAB1, ABI1 and ABI2, and possibly with other PP2Cs.

It is found in the cytoplasm. The protein localises to the nucleus. It localises to the cell membrane. Receptor for abscisic acid (ABA) required for ABA-mediated responses such as stomatal closure and germination inhibition. Inhibits the activity of group-A protein phosphatases type 2C (PP2Cs) when activated by ABA. Can be activated by both (-)-ABA and (+)-ABA. This is Abscisic acid receptor PYL3 (PYL3) from Arabidopsis thaliana (Mouse-ear cress).